The following is a 271-amino-acid chain: Cyanophycinase (271 aa).

Active-site charge relay system residues include Ser132, His174, and Glu201.

The protein belongs to the peptidase S51 family. In terms of assembly, homodimer.

The enzyme catalyses [L-4-(L-arginin-2-N-yl)aspartate](n) + H2O = [L-4-(L-arginin-2-N-yl)aspartate](n-1) + L-4-(L-arginin-2-N-yl)aspartate. Exopeptidase that catalyzes the hydrolytic cleavage of multi-L-arginyl-poly-L-aspartic acid (cyanophycin; a water-insoluble reserve polymer) into aspartate-arginine dipeptides. The protein is Cyanophycinase (cphB) of Synechocystis sp. (strain ATCC 27184 / PCC 6803 / Kazusa).